The chain runs to 68 residues: Large ribosomal subunit protein uL30 (68 aa).

Positions Met-1–Ser-26 are disordered. The span at Ser-8–Gly-18 shows a compositional bias: polar residues.

The protein belongs to the universal ribosomal protein uL30 family. Part of the 50S ribosomal subunit.

The chain is Large ribosomal subunit protein uL30 from Parvibaculum lavamentivorans (strain DS-1 / DSM 13023 / NCIMB 13966).